Here is a 440-residue protein sequence, read N- to C-terminus: Argininosuccinate lyase (440 aa).

This sequence belongs to the lyase 1 family. Argininosuccinate lyase subfamily.

It is found in the cytoplasm. It catalyses the reaction 2-(N(omega)-L-arginino)succinate = fumarate + L-arginine. It participates in amino-acid biosynthesis; L-arginine biosynthesis; L-arginine from L-ornithine and carbamoyl phosphate: step 3/3. The sequence is that of Argininosuccinate lyase from Clostridium botulinum (strain Okra / Type B1).